The sequence spans 91 residues: DNA-directed RNA polymerase subunit omega (91 aa).

Belongs to the RNA polymerase subunit omega family. The RNAP catalytic core consists of 2 alpha, 1 beta, 1 beta' and 1 omega subunit. When a sigma factor is associated with the core the holoenzyme is formed, which can initiate transcription.

It carries out the reaction RNA(n) + a ribonucleoside 5'-triphosphate = RNA(n+1) + diphosphate. Its function is as follows. Promotes RNA polymerase assembly. Latches the N- and C-terminal regions of the beta' subunit thereby facilitating its interaction with the beta and alpha subunits. The polypeptide is DNA-directed RNA polymerase subunit omega (Enterobacter sp. (strain 638)).